Here is a 345-residue protein sequence, read N- to C-terminus: Phenylalanine--tRNA ligase alpha subunit (345 aa).

Glu255 contributes to the Mg(2+) binding site.

Belongs to the class-II aminoacyl-tRNA synthetase family. Phe-tRNA synthetase alpha subunit type 1 subfamily. As to quaternary structure, tetramer of two alpha and two beta subunits. The cofactor is Mg(2+).

It is found in the cytoplasm. It catalyses the reaction tRNA(Phe) + L-phenylalanine + ATP = L-phenylalanyl-tRNA(Phe) + AMP + diphosphate + H(+). This Lysinibacillus sphaericus (strain C3-41) protein is Phenylalanine--tRNA ligase alpha subunit.